The primary structure comprises 264 residues: Hydroxyethylthiazole kinase (264 aa).

Methionine 41 lines the substrate pocket. The ATP site is built by lysine 117 and serine 163. Glycine 190 lines the substrate pocket.

The protein belongs to the Thz kinase family. Requires Mg(2+) as cofactor.

It catalyses the reaction 5-(2-hydroxyethyl)-4-methylthiazole + ATP = 4-methyl-5-(2-phosphooxyethyl)-thiazole + ADP + H(+). Its pathway is cofactor biosynthesis; thiamine diphosphate biosynthesis; 4-methyl-5-(2-phosphoethyl)-thiazole from 5-(2-hydroxyethyl)-4-methylthiazole: step 1/1. Its function is as follows. Catalyzes the phosphorylation of the hydroxyl group of 4-methyl-5-beta-hydroxyethylthiazole (THZ). The protein is Hydroxyethylthiazole kinase of Thermoanaerobacter pseudethanolicus (strain ATCC 33223 / 39E) (Clostridium thermohydrosulfuricum).